Here is a 493-residue protein sequence, read N- to C-terminus: Dipeptidase 3 (493 aa).

A signal peptide spans 1–35 (MQPAGLEGPRALGLRPLGHRLSLLGVLLLVPSLWV). Residues 41 to 60 (TPSPSSAPTTPEASNATTAP) show a composition bias toward low complexity. Positions 41-74 (TPSPSSAPTTPEASNATTAPGIPNDTATSGVTSD) are disordered. Intrachain disulfides connect cysteine 143/cysteine 222 and cysteine 294/cysteine 326. N-linked (GlcNAc...) asparagine glycosylation is present at asparagine 331. Serine 462 carries the GPI-anchor amidated serine lipid modification. Positions 463-493 (KAPPHPLPGLMATLTSLALILWLCCSGHRAV) are cleaved as a propeptide — removed in mature form.

It belongs to the metallo-dependent hydrolases superfamily. Peptidase M19 family. In terms of assembly, homodimer; disulfide-linked. Interacts with TEX101; co-localized on the cell surface of spermatocytes, spermatids, and testicular spermatozoa, co-localized only in cytoplasmic droplets of caput and corpus epididymal sperm. Expressed in testis but not ovary.

It localises to the membrane. Its function is as follows. Lacks dipeptidase activity and is unable to hydrolyze cystinyl-bis-glycine. The absence of activity may be due to the inability of serine (instead of aspartate found in DPEP1/2) at position 356 to function as the acid/base catalyst and activate the nucleophilic water/hydroxide. Does not hydrolyze leukotriene D4 (LTD4) into leukotriene E4 (LTE4). Does not hydrolyze the beta-lactam antibiotic imipenem. The chain is Dipeptidase 3 (Dpep3) from Mus musculus (Mouse).